The following is a 928-amino-acid chain: MKIKDTLNMGKTSFPMRAGLPKNESIWQKKWDEDHVYEQRQKLNEGKPTFMLHDGPPFANGNIHMGHALNKISKDIIVRYKSMNGFRAPYVPGWDTHGLPIEQQLAKQGVKRKEMSMTDYRELCRQFAMQEIDKQRTDFKRLGVMGDWEHPYITLQHHYEASEIRVFGAMAKKGYIYHGLKPVYWSWSSESTLAEAEIEYHDDKSPSIYVAFKVVDGKGLLDTDTYLVIWTTTPWTIPANYGITVNPRFDYVQVQVGDKKYVVAAELLDRVAEEIGWENPKILKTFKGTDMDKMTAQHPLYDRTSLVMNADHVTLDAGTGLVHTAPGHGEDDYKVGVKYGLPVVSVVDAKGYMNEYAPGFEGVFYDDANKQITQALADKGALLKLDFFTHSYPHDWRTKKPVIFRATTQWFASIDAFRDQILKAIDTVDFKPSWGKTRLYNMIRDRGDWVISRQRAWGVPLPIFYAEDGEPIIEEETINHVADLFGKYGSNVWFEREAKDLLPEGYTNPHSPNGQFTKEKDIMDVWFDSGSSHQAVLAARPELSFPADLYLEGSDQYRGWFNSSLITSVAATGVAPYRGILSQGFTLDGKGRKMSKSLGNTIVPATIEKQFGAEIIRLWVATVDSSSDVRVSVDNFAQTSEAYRKIRNTMRFMVANTGDFDPEKDTVAYDELGSVDRYMMVRLNQIIKQVKTAYDAYDFATVEKTISSFLVNDLSAFYLDVAKDVVYIEAKDDPKRRGMQTVMFAALLALTKLITPILPHTAEEVWPYLKQPEAYAALADMPEAEQFDDESQLLDIWSGFMDFRSEVQKALELARDNKVIGKSLEAAVTVYPSEPVRDMLDDVDANVMQLLITSHFEIAPATTQAPANAEQFDDMAVVVKHADGEVCPRCRMVRTDIGTDPKLPQLCSRCAAIVEANFPDAVTNGFDK.

A 'HIGH' region motif is present at residues 57–67 (PFANGNIHMGH). E552 lines the L-isoleucyl-5'-AMP pocket. The 'KMSKS' region signature appears at 593–597 (KMSKS). K596 serves as a coordination point for ATP. Zn(2+) is bound by residues C887, C890, C907, and C910.

It belongs to the class-I aminoacyl-tRNA synthetase family. IleS type 1 subfamily. Monomer. Zn(2+) serves as cofactor.

The protein localises to the cytoplasm. It catalyses the reaction tRNA(Ile) + L-isoleucine + ATP = L-isoleucyl-tRNA(Ile) + AMP + diphosphate. Its function is as follows. Catalyzes the attachment of isoleucine to tRNA(Ile). As IleRS can inadvertently accommodate and process structurally similar amino acids such as valine, to avoid such errors it has two additional distinct tRNA(Ile)-dependent editing activities. One activity is designated as 'pretransfer' editing and involves the hydrolysis of activated Val-AMP. The other activity is designated 'posttransfer' editing and involves deacylation of mischarged Val-tRNA(Ile). In Lacticaseibacillus paracasei (strain ATCC 334 / BCRC 17002 / CCUG 31169 / CIP 107868 / KCTC 3260 / NRRL B-441) (Lactobacillus paracasei), this protein is Isoleucine--tRNA ligase.